Reading from the N-terminus, the 342-residue chain is UDP-3-O-acylglucosamine N-acyltransferase (342 aa).

His253 functions as the Proton acceptor in the catalytic mechanism.

The protein belongs to the transferase hexapeptide repeat family. LpxD subfamily. In terms of assembly, homotrimer.

The enzyme catalyses a UDP-3-O-[(3R)-3-hydroxyacyl]-alpha-D-glucosamine + a (3R)-hydroxyacyl-[ACP] = a UDP-2-N,3-O-bis[(3R)-3-hydroxyacyl]-alpha-D-glucosamine + holo-[ACP] + H(+). The protein operates within bacterial outer membrane biogenesis; LPS lipid A biosynthesis. Functionally, catalyzes the N-acylation of UDP-3-O-acylglucosamine using 3-hydroxyacyl-ACP as the acyl donor. Is involved in the biosynthesis of lipid A, a phosphorylated glycolipid that anchors the lipopolysaccharide to the outer membrane of the cell. The protein is UDP-3-O-acylglucosamine N-acyltransferase of Rickettsia bellii (strain RML369-C).